The sequence spans 105 residues: MATIQQQKIRIRLKAFDRRLLDTSCEKIVDTANRTGATALGPIPLPTKRRIYCVLRSPHVDKDSREHFETRTHRRIIDIYQPSSKTIDALMKLDLPAGVDIEVKL.

It belongs to the universal ribosomal protein uS10 family. Part of the 30S ribosomal subunit.

Functionally, involved in the binding of tRNA to the ribosomes. The polypeptide is Small ribosomal subunit protein uS10 (Arthrospira platensis (Spirulina platensis)).